The chain runs to 27 residues: Cupiennin-3d (27 aa).

A Glutamic acid 1-amide modification is found at Glu27.

In terms of tissue distribution, expressed by the venom gland.

It is found in the secreted. This is Cupiennin-3d from Cupiennius salei (American wandering spider).